Reading from the N-terminus, the 483-residue chain is GTPase Der (483 aa).

2 consecutive EngA-type G domains span residues 3–167 (FTLA…GEER) and 212–387 (LRIA…EIWN). Residues 9 to 16 (GRPNVGKS), 56 to 60 (DTAGL), 119 to 122 (NKAE), 218 to 225 (GRPNAGKS), 265 to 269 (DTAGM), and 330 to 333 (NKWD) each bind GTP. Positions 388–472 (RRISTGRLNR…PIRLSLRTSD (85 aa)) constitute a KH-like domain.

The protein belongs to the TRAFAC class TrmE-Era-EngA-EngB-Septin-like GTPase superfamily. EngA (Der) GTPase family. As to quaternary structure, associates with the 50S ribosomal subunit.

In terms of biological role, GTPase that plays an essential role in the late steps of ribosome biogenesis. This Brucella ovis (strain ATCC 25840 / 63/290 / NCTC 10512) protein is GTPase Der.